The sequence spans 202 residues: Outer-membrane lipoprotein LolB (202 aa).

The first 24 residues, 1 to 24 (MESKEQHLIRQYFILAMFFLFLAG), serve as a signal peptide directing secretion. Cys25 carries N-palmitoyl cysteine lipidation. The S-diacylglycerol cysteine moiety is linked to residue Cys25.

Belongs to the LolB family. In terms of assembly, monomer.

It localises to the cell outer membrane. Functionally, plays a critical role in the incorporation of lipoproteins in the outer membrane after they are released by the LolA protein. This is Outer-membrane lipoprotein LolB from Pseudoalteromonas translucida (strain TAC 125).